A 170-amino-acid chain; its full sequence is Ribosome maturation factor RimM (170 aa).

Positions 96-169 (EGEFYACDVE…VVQLATLEGL (74 aa)) constitute a PRC barrel domain.

It belongs to the RimM family. Binds ribosomal protein uS19.

Its subcellular location is the cytoplasm. Functionally, an accessory protein needed during the final step in the assembly of 30S ribosomal subunit, possibly for assembly of the head region. Essential for efficient processing of 16S rRNA. May be needed both before and after RbfA during the maturation of 16S rRNA. It has affinity for free ribosomal 30S subunits but not for 70S ribosomes. This chain is Ribosome maturation factor RimM, found in Sorangium cellulosum (strain So ce56) (Polyangium cellulosum (strain So ce56)).